The chain runs to 800 residues: Phenylalanine--tRNA ligase beta subunit (800 aa).

The tRNA-binding domain occupies 39–148; sequence TAALAPFVVG…ADTPVGVPLV (110 aa). The B5 domain occupies 402–478; sequence VWRRTIALRP…RLHGFDLVPA (77 aa). Residues Asp456, Asp462, Glu465, and Glu466 each coordinate Mg(2+). Residues 706-799 form the FDX-ACB domain; it reads SPFQPVARDF…VTKLTGGSLR (94 aa).

The protein belongs to the phenylalanyl-tRNA synthetase beta subunit family. Type 1 subfamily. As to quaternary structure, tetramer of two alpha and two beta subunits. Mg(2+) serves as cofactor.

The protein resides in the cytoplasm. The enzyme catalyses tRNA(Phe) + L-phenylalanine + ATP = L-phenylalanyl-tRNA(Phe) + AMP + diphosphate + H(+). The chain is Phenylalanine--tRNA ligase beta subunit from Rhodospirillum rubrum (strain ATCC 11170 / ATH 1.1.1 / DSM 467 / LMG 4362 / NCIMB 8255 / S1).